A 615-amino-acid polypeptide reads, in one-letter code: DNA mismatch repair protein MutL (615 aa).

The disordered stretch occupies residues Phe-363 to Tyr-397. Residues Pro-378–Pro-391 are compositionally biased toward low complexity.

This sequence belongs to the DNA mismatch repair MutL/HexB family.

Functionally, this protein is involved in the repair of mismatches in DNA. It is required for dam-dependent methyl-directed DNA mismatch repair. May act as a 'molecular matchmaker', a protein that promotes the formation of a stable complex between two or more DNA-binding proteins in an ATP-dependent manner without itself being part of a final effector complex. This chain is DNA mismatch repair protein MutL, found in Escherichia coli O157:H7.